Here is a 107-residue protein sequence, read N- to C-terminus: Essential MCU regulator, mitochondrial (107 aa).

The N-terminal 47 residues, 1 to 47 (MASGAARWLALVRVGSGASRSWLSLRKGGDVSAGRSCSGQSLVPTRS), are a transit peptide targeting the mitochondrion. The Mitochondrial matrix portion of the chain corresponds to 48–65 (VIVTRSGAILPKPVKMSF). A helical transmembrane segment spans residues 66–85 (GLLRVFSIVIPFLYVGTLIS). The GXXXX[G/A/S] motif lies at 81–85 (GTLIS). The Mitochondrial intermembrane segment spans residues 86-107 (KNFAALLEEHDIFVPEDDDDDD).

It belongs to the SMDT1/EMRE family. As to quaternary structure, component of the uniplex complex, composed of MCU, EMRE/SMDT1, MICU1 and MICU2 (or MICU3) in a 4:4:1:1 stoichiometry. The number of EMRE/SMDT1 molecules is hovewer variable, ranging from 1 to 4 copies per uniplex complex, leading to uniplex complexes with distinct gatekeeping profiles. Interacts (via its C-terminal poly-Asp tail) with MCUR1; the interaction is direct. Unprocessed form interacts (via transit peptide) with MAIP1. In terms of processing, undergoes proteolytic degradation in neurons: degraded by AFG3L2 and SPG7 before SMDT1/EMRE assembly with the uniporter complex, limiting the availability of SMDT1/EMRE for MCU assembly and promoting efficient assembly of gatekeeper subunits with MCU.

It localises to the mitochondrion inner membrane. Functionally, essential regulatory subunit of the mitochondrial calcium uniporter complex (uniplex), a complex that mediates calcium uptake into mitochondria. Required to bridge the calcium-sensing proteins MICU1 with the calcium-conducting subunit MCU. Acts by mediating activation of MCU and retention of MICU1 to the MCU pore, in order to ensure tight regulation of the uniplex complex and appropriate responses to intracellular calcium signaling. This chain is Essential MCU regulator, mitochondrial, found in Bos taurus (Bovine).